The sequence spans 371 residues: Peptide chain release factor 2 (371 aa).

Residue Q251 is modified to N5-methylglutamine.

This sequence belongs to the prokaryotic/mitochondrial release factor family. Methylated by PrmC. Methylation increases the termination efficiency of RF2.

It localises to the cytoplasm. Peptide chain release factor 2 directs the termination of translation in response to the peptide chain termination codons UGA and UAA. The polypeptide is Peptide chain release factor 2 (Arthrobacter sp. (strain FB24)).